A 340-amino-acid polypeptide reads, in one-letter code: Phosphoribosylformylglycinamidine cyclo-ligase (340 aa).

It belongs to the AIR synthase family.

The protein resides in the cytoplasm. The enzyme catalyses 2-formamido-N(1)-(5-O-phospho-beta-D-ribosyl)acetamidine + ATP = 5-amino-1-(5-phospho-beta-D-ribosyl)imidazole + ADP + phosphate + H(+). The protein operates within purine metabolism; IMP biosynthesis via de novo pathway; 5-amino-1-(5-phospho-D-ribosyl)imidazole from N(2)-formyl-N(1)-(5-phospho-D-ribosyl)glycinamide: step 2/2. The polypeptide is Phosphoribosylformylglycinamidine cyclo-ligase (Streptococcus pneumoniae (strain CGSP14)).